The chain runs to 211 residues: Guanylate kinase (211 aa).

The Guanylate kinase-like domain maps to 7–185; sequence GLLIVVTGPS…AVAELRAIIM (179 aa). Position 14 to 21 (14 to 21) interacts with ATP; sequence GPSAVGKG.

The protein belongs to the guanylate kinase family.

The protein resides in the cytoplasm. It catalyses the reaction GMP + ATP = GDP + ADP. In terms of biological role, essential for recycling GMP and indirectly, cGMP. The sequence is that of Guanylate kinase from Symbiobacterium thermophilum (strain DSM 24528 / JCM 14929 / IAM 14863 / T).